The primary structure comprises 217 residues: UPF0502 protein AHA_2872 (217 aa).

The protein belongs to the UPF0502 family.

The sequence is that of UPF0502 protein AHA_2872 from Aeromonas hydrophila subsp. hydrophila (strain ATCC 7966 / DSM 30187 / BCRC 13018 / CCUG 14551 / JCM 1027 / KCTC 2358 / NCIMB 9240 / NCTC 8049).